A 619-amino-acid chain; its full sequence is Pentatricopeptide repeat-containing protein At3g22470, mitochondrial (619 aa).

The N-terminal 28 residues, 1 to 28, are a transit peptide targeting the mitochondrion; the sequence is MIQRLIPLNRKASNFTQILEKGTSLLHY. 15 PPR repeats span residues 69 to 103, 104 to 138, 139 to 173, 174 to 208, 209 to 243, 244 to 278, 279 to 313, 314 to 348, 349 to 383, 384 to 418, 419 to 453, 454 to 488, 489 to 523, 524 to 558, and 559 to 593; these read TPIDFNRLCSAVARTKQYDLVLGFCKGMELNGIEH, DMYTMTIMINCYCRKKKLLFAFSVLGRAWKLGYEP, DTITFSTLVNGFCLEGRVSEAVALVDRMVEMKQRP, DLVTVSTLINGLCLKGRVSEALVLIDRMVEYGFQP, DEVTYGPVLNRLCKSGNSALALDLFRKMEERNIKA, SVVQYSIVIDSLCKDGSFDDALSLFNEMEMKGIKA, DVVTYSSLIGGLCNDGKWDDGAKMLREMIGRNIIP, DVVTFSALIDVFVKEGKLLEAKELYNEMITRGIAP, DTITYNSLIDGFCKENCLHEANQMFDLMVSKGCEP, DIVTYSILINSYCKAKRVDDGMRLFREISSKGLIP, NTITYNTLVLGFCQSGKLNAAKELFQEMVSRGVPP, SVVTYGILLDGLCDNGELNKALEIFEKMQKSRMTL, GIGIYNIIIHGMCNASKVDDAWSLFCSLSDKGVKP, DVVTYNVMIGGLCKKGSLSEADMLFRKMKEDGCTP, and DDFTYNILIRAHLGGSGLISSVELIEEMKVCGFSA.

This sequence belongs to the PPR family. P subfamily.

It is found in the mitochondrion. The chain is Pentatricopeptide repeat-containing protein At3g22470, mitochondrial from Arabidopsis thaliana (Mouse-ear cress).